Here is a 1428-residue protein sequence, read N- to C-terminus: DNA polymerase III PolC-type (1428 aa).

Residues 414–570 (FVVFDVETTG…YDAEATGYLL (157 aa)) form the Exonuclease domain.

It belongs to the DNA polymerase type-C family. PolC subfamily.

It is found in the cytoplasm. The enzyme catalyses DNA(n) + a 2'-deoxyribonucleoside 5'-triphosphate = DNA(n+1) + diphosphate. In terms of biological role, required for replicative DNA synthesis. This DNA polymerase also exhibits 3' to 5' exonuclease activity. The protein is DNA polymerase III PolC-type of Oceanobacillus iheyensis (strain DSM 14371 / CIP 107618 / JCM 11309 / KCTC 3954 / HTE831).